The following is a 426-amino-acid chain: Tyrosine--tRNA ligase (426 aa).

Tyrosine 36 serves as a coordination point for L-tyrosine. The 'HIGH' region motif lies at 41–50 (PTAPSLHVGH). Residues tyrosine 174 and glutamine 178 each contribute to the L-tyrosine site. The 'KMSKS' region signature appears at 234 to 238 (KLGKS). Lysine 237 contacts ATP. Positions 359-416 (DGIVDLLVASGLSPSRGAARRTIDEGGVLVNNIRIQSEEWTPRTSDFLHGRWLVLRRG) constitute an S4 RNA-binding domain.

This sequence belongs to the class-I aminoacyl-tRNA synthetase family. TyrS type 1 subfamily. In terms of assembly, homodimer.

It is found in the cytoplasm. The enzyme catalyses tRNA(Tyr) + L-tyrosine + ATP = L-tyrosyl-tRNA(Tyr) + AMP + diphosphate + H(+). Functionally, catalyzes the attachment of tyrosine to tRNA(Tyr) in a two-step reaction: tyrosine is first activated by ATP to form Tyr-AMP and then transferred to the acceptor end of tRNA(Tyr). This chain is Tyrosine--tRNA ligase, found in Mycobacterium leprae (strain TN).